The primary structure comprises 494 residues: Glutamate decarboxylase 2 (494 aa).

N6-(pyridoxal phosphate)lysine is present on Lys-276. Residues 463 to 494 (VKEKKMEKEILMEVIVGWRKFVKERKKMNGVC) form a calmodulin-binding region.

The protein belongs to the group II decarboxylase family. As to quaternary structure, homohexamer. Interacts with calmodulin. Requires pyridoxal 5'-phosphate as cofactor. Expressed in roots, inflorescence stems, flowers, siliques and leaves.

It carries out the reaction L-glutamate + H(+) = 4-aminobutanoate + CO2. Its activity is regulated as follows. Up-regulated by calmodulin binding at physiological pH. Catalyzes the conversion of glutamate to 4-aminobutanoate (GABA). The calmodulin-binding is calcium-dependent and it is proposed to directly or indirectly form a calcium regulated control of GABA biosynthesis. The chain is Glutamate decarboxylase 2 (GAD2) from Arabidopsis thaliana (Mouse-ear cress).